We begin with the raw amino-acid sequence, 184 residues long: ATP-dependent protease subunit HslV (184 aa).

Residue Thr-8 is part of the active site. Residues Gly-165, Asp-168, and Thr-171 each coordinate Na(+).

It belongs to the peptidase T1B family. HslV subfamily. In terms of assembly, a double ring-shaped homohexamer of HslV is capped on each side by a ring-shaped HslU homohexamer. The assembly of the HslU/HslV complex is dependent on binding of ATP.

Its subcellular location is the cytoplasm. It carries out the reaction ATP-dependent cleavage of peptide bonds with broad specificity.. With respect to regulation, allosterically activated by HslU binding. In terms of biological role, protease subunit of a proteasome-like degradation complex believed to be a general protein degrading machinery. The chain is ATP-dependent protease subunit HslV from Pediococcus pentosaceus (strain ATCC 25745 / CCUG 21536 / LMG 10740 / 183-1w).